A 515-amino-acid chain; its full sequence is Probable cytochrome P450 6d4 (515 aa).

Cys457 lines the heme pocket.

This sequence belongs to the cytochrome P450 family. Requires heme as cofactor.

It is found in the endoplasmic reticulum membrane. The protein resides in the microsome membrane. Functionally, may be involved in the metabolism of insect hormones and in the breakdown of synthetic insecticides. This is Probable cytochrome P450 6d4 (Cyp6d4) from Drosophila melanogaster (Fruit fly).